The sequence spans 258 residues: Shikimate dehydrogenase (NADP(+)) (258 aa).

Shikimate contacts are provided by residues Ser-14–Ser-16 and Thr-61. The Proton acceptor role is filled by Lys-65. Asn-86 and Asp-101 together coordinate shikimate. NADP(+) contacts are provided by residues Gly-125–Ser-129 and Leu-211. Tyr-213 is a shikimate binding site. Gly-234 contributes to the NADP(+) binding site.

This sequence belongs to the shikimate dehydrogenase family. In terms of assembly, homodimer.

It carries out the reaction shikimate + NADP(+) = 3-dehydroshikimate + NADPH + H(+). The protein operates within metabolic intermediate biosynthesis; chorismate biosynthesis; chorismate from D-erythrose 4-phosphate and phosphoenolpyruvate: step 4/7. Functionally, involved in the biosynthesis of the chorismate, which leads to the biosynthesis of aromatic amino acids. Catalyzes the reversible NADPH linked reduction of 3-dehydroshikimate (DHSA) to yield shikimate (SA). This is Shikimate dehydrogenase (NADP(+)) from Clostridium botulinum (strain Loch Maree / Type A3).